The sequence spans 269 residues: MPELPEVETSRRGIEPYLVGATILHAVVRNGRLRWPVSEEIYRLSDQPVLSVQRRAKYLLLELPEGWIIIHLGMSGSLRILPEELPPEKHDHVDLVMSNGKVLRYTDPRRFGAWLWTKELEGHNVLAHLGPEPLSDDFNGEYLHQKCAKKKTAIKPWLMDNKLVVGVGNIYASESLFAAGIHPDRLASSLSLAECELLARVIKAVLLRSIEQGGTTLKDFLQSDGKPGYFAQELQVYGRKGEPCRVCGTPIVATKHAQRATFYCRQCQK.

The Schiff-base intermediate with DNA role is filled by Pro-2. Catalysis depends on Glu-3, which acts as the Proton donor. Lys-57 acts as the Proton donor; for beta-elimination activity in catalysis. 3 residues coordinate DNA: His-90, Arg-109, and Lys-150. An FPG-type zinc finger spans residues 235 to 269 (QVYGRKGEPCRVCGTPIVATKHAQRATFYCRQCQK). The active-site Proton donor; for delta-elimination activity is Arg-259.

The protein belongs to the FPG family. Monomer. Zn(2+) serves as cofactor.

It carries out the reaction Hydrolysis of DNA containing ring-opened 7-methylguanine residues, releasing 2,6-diamino-4-hydroxy-5-(N-methyl)formamidopyrimidine.. The enzyme catalyses 2'-deoxyribonucleotide-(2'-deoxyribose 5'-phosphate)-2'-deoxyribonucleotide-DNA = a 3'-end 2'-deoxyribonucleotide-(2,3-dehydro-2,3-deoxyribose 5'-phosphate)-DNA + a 5'-end 5'-phospho-2'-deoxyribonucleoside-DNA + H(+). Functionally, involved in base excision repair of DNA damaged by oxidation or by mutagenic agents. Acts as a DNA glycosylase that recognizes and removes damaged bases. Has a preference for oxidized purines, such as 7,8-dihydro-8-oxoguanine (8-oxoG). Has AP (apurinic/apyrimidinic) lyase activity and introduces nicks in the DNA strand. Cleaves the DNA backbone by beta-delta elimination to generate a single-strand break at the site of the removed base with both 3'- and 5'-phosphates. The chain is Formamidopyrimidine-DNA glycosylase from Escherichia coli O7:K1 (strain IAI39 / ExPEC).